We begin with the raw amino-acid sequence, 111 residues long: Stress-response A/B barrel domain-containing protein At5g22580 (111 aa).

The 93-residue stretch at 6–98 (FKHLVVVKFK…VIDKIVLLDF (93 aa)) folds into the Stress-response A/B barrel domain. Mg(2+) is bound by residues valine 31, isoleucine 34, aspartate 35, and valine 37.

Homodimer. Mg(2+) serves as cofactor.

In terms of biological role, involved in stress response. The chain is Stress-response A/B barrel domain-containing protein At5g22580 from Arabidopsis thaliana (Mouse-ear cress).